The sequence spans 529 residues: MSEIWEDAIKSNAWPFVEAKKILDSLNGKTPEKGYLLFETGYGPSGLPHIGTFGENARIVMVQKAFEQLSDIPTKLICFSDDMDGLRKVPSNIPHPEMVAGYMDMPLTSIPDPFGECESYGHYMNAKLRSFLDKFGFKYEFYSSTNCYKAGMFDEMLIRVLEQYDKIMELMLPTFREERKATYSPFMPVCLKTGKVLQVPIEKWDAKVGTVTYKDEAGNYIEVPVTGGHCKLQWKPDFGMRWAALKVDYEMYGKDHLANARLYSEICRILGGKPPVQLCYELFLDENGEKISKSKGNSISVDDWLKYAPVESMALFMYQNPTRAKRLFFDVIPKNVDEYITFNQKYHLEEDRAKRFANPVYHIHHGNVPKIETFGITYVLLLNLTSVCNPSDKTVLWGFISKYEPKATPNTSPYLDHLAEFAIRYYNDFIKAHKSYLAPSEKHNVILRDILDMLSDISDQTEAEGIQKAIYDIGMRAGYENLRDYFKDLYQILLGQSEGPRLGTFIKLYGVQETKKLVAGKLTMLSRKK.

Positions 44–52 match the 'HIGH' region motif; sequence PSGLPHIGT. The 'KMSKS' region motif lies at 290–294; that stretch reads KISKS. K293 lines the ATP pocket.

The protein belongs to the class-I aminoacyl-tRNA synthetase family.

It is found in the cytoplasm. The enzyme catalyses tRNA(Lys) + L-lysine + ATP = L-lysyl-tRNA(Lys) + AMP + diphosphate. The chain is Lysine--tRNA ligase from Rickettsia akari (strain Hartford).